Consider the following 228-residue polypeptide: Vesicle transport protein SEC20 (228 aa).

Residues 1–199 (MAAPQDVHVR…LITKYNRREL (199 aa)) lie on the Cytoplasmic side of the membrane. A coiled-coil region spans residues 37–90 (LSELTELNTKVKEKFQQLKHRIQELEQSAKEQDKESEKQLLLQEVENHKKQMLS). A helical; Anchor for type IV membrane protein membrane pass occupies residues 200-220 (TDKLLIFLALALFLATVLYIV). Over 221–228 (KKRLFPFL) the chain is Lumenal.

The protein belongs to the SEC20 family. As to quaternary structure, component of a SNARE complex consisting of STX18, USE1L, BNIP1/SEC20L and SEC22B. Interacts directly with STX18, RINT1/TIP20L and NAPA. Interacts with ZW10 through RINT1. Interacts with BCL2. Interacts with RNF186. Interacts with RNF185. Interacts with SQSTM1; increased by 'Lys-63'-linked polyubiquitination of BNIP1. In terms of processing, polyubiquitinated. 'Lys-63'-linked polyubiquitination by RNF185 increases the interaction with the autophagy receptor SQSTM1. Undergoes 'Lys-29'- and 'Lys-63'-linked polyubiquitination by RNF186 that may regulate BNIP1 localization to the mitochondrion.

It is found in the endoplasmic reticulum membrane. Its subcellular location is the mitochondrion membrane. As part of a SNARE complex may be involved in endoplasmic reticulum membranes fusion and be required for the maintenance of endoplasmic reticulum organization. Also plays a role in apoptosis. It is for instance required for endoplasmic reticulum stress-induced apoptosis. As a substrate of RNF185 interacting with SQSTM1, might also be involved in mitochondrial autophagy. This Rattus norvegicus (Rat) protein is Vesicle transport protein SEC20.